The following is a 305-amino-acid chain: ATP synthase gamma chain (305 aa).

It belongs to the ATPase gamma chain family. F-type ATPases have 2 components, CF(1) - the catalytic core - and CF(0) - the membrane proton channel. CF(1) has five subunits: alpha(3), beta(3), gamma(1), delta(1), epsilon(1). CF(0) has three main subunits: a, b and c.

The protein localises to the cell membrane. Functionally, produces ATP from ADP in the presence of a proton gradient across the membrane. The gamma chain is believed to be important in regulating ATPase activity and the flow of protons through the CF(0) complex. This Streptomyces avermitilis (strain ATCC 31267 / DSM 46492 / JCM 5070 / NBRC 14893 / NCIMB 12804 / NRRL 8165 / MA-4680) protein is ATP synthase gamma chain.